Reading from the N-terminus, the 236-residue chain is Uridylate kinase (236 aa).

Residue 10–13 (KLSG) participates in ATP binding. Gly52 contacts UMP. ATP contacts are provided by Gly53 and Arg57. UMP-binding positions include Asp72 and 133-140 (TGNPFFTT). 3 residues coordinate ATP: Thr160, Tyr166, and Asp169.

The protein belongs to the UMP kinase family. In terms of assembly, homohexamer.

It localises to the cytoplasm. The catalysed reaction is UMP + ATP = UDP + ADP. It functions in the pathway pyrimidine metabolism; CTP biosynthesis via de novo pathway; UDP from UMP (UMPK route): step 1/1. With respect to regulation, inhibited by UTP. Catalyzes the reversible phosphorylation of UMP to UDP. In Bacteroides fragilis (strain ATCC 25285 / DSM 2151 / CCUG 4856 / JCM 11019 / LMG 10263 / NCTC 9343 / Onslow / VPI 2553 / EN-2), this protein is Uridylate kinase.